Here is a 406-residue protein sequence, read N- to C-terminus: MTLDVGPEDELPDWAAAKEFYQKYDPKDIIGRGVSSVVRRCVHRATGDEFAVKIMEVSAERLSLEQLEEVRDATRREMHILRQVAGHPHIITLIDSYESSSFMFLVFDLMRKGELFDYLTEKVALSEKETRSIMRSLLEAVNFLHVNNIVHRDLKPENILLDDNMQIRLSDFGFSCHLEPGEKLRELCGTPGYLAPEILKCSMDETHPGYGKEVDLWACGVILFTLLAGSPPFWHRRQILMLRMIMEGQYQFSSPEWDDRSNTVKDLIAKLLQVDPNARLTAEQALQHPFFERCKGSQPWNLTPRQRFRVAVWTILAAGRVALSSHRLRPLTKNALLRDPYALRPVRRLIDNCAFRLYGHWVKKGEQQNRAALFQHQPPRPFPIIATDLEGDSSAITEDEVTLVRS.

Residues 24 to 291 (YDPKDIIGRG…AEQALQHPFF (268 aa)) form the Protein kinase domain. ATP-binding positions include 30-38 (IGRGVSSVV) and Lys-53. The active-site Proton acceptor is the Asp-153. A calmodulin-binding (domain-N) region spans residues 306 to 330 (QRFRVAVWTILAAGRVALSSHRLRP). The tract at residues 346-370 (VRRLIDNCAFRLYGHWVKKGEQQNR) is calmodulin-binding (domain-C).

The protein belongs to the protein kinase superfamily. CAMK Ser/Thr protein kinase family. As to quaternary structure, hexadecamer of 4 heterotetramers, each composed of alpha, beta, gamma, and delta subunits. Alpha (PHKA1 or PHKA2) and beta (PHKB) are regulatory subunits, gamma (PHKG1 or PHKG2) is the catalytic subunit, and delta is calmodulin.

It carries out the reaction 2 ATP + phosphorylase b = 2 ADP + phosphorylase a.. Functionally, catalytic subunit of the phosphorylase b kinase (PHK), which mediates the neural and hormonal regulation of glycogen breakdown (glycogenolysis) by phosphorylating and thereby activating glycogen phosphorylase. May regulate glycogeneolysis in the testis. In vitro, phosphorylates PYGM. The sequence is that of Phosphorylase b kinase gamma catalytic chain, liver/testis isoform (Phkg2) from Rattus norvegicus (Rat).